A 320-amino-acid chain; its full sequence is o-succinylbenzoate synthase (320 aa).

Lys-133 (proton donor) is an active-site residue. Residues Asp-161, Glu-190, and Asp-213 each contribute to the Mg(2+) site. The active-site Proton acceptor is Lys-235.

This sequence belongs to the mandelate racemase/muconate lactonizing enzyme family. MenC type 1 subfamily. The cofactor is a divalent metal cation.

It carries out the reaction (1R,6R)-6-hydroxy-2-succinyl-cyclohexa-2,4-diene-1-carboxylate = 2-succinylbenzoate + H2O. The protein operates within quinol/quinone metabolism; 1,4-dihydroxy-2-naphthoate biosynthesis; 1,4-dihydroxy-2-naphthoate from chorismate: step 4/7. Its pathway is quinol/quinone metabolism; menaquinone biosynthesis. In terms of biological role, converts 2-succinyl-6-hydroxy-2,4-cyclohexadiene-1-carboxylate (SHCHC) to 2-succinylbenzoate (OSB). This Salmonella dublin (strain CT_02021853) protein is o-succinylbenzoate synthase.